The primary structure comprises 158 residues: Transcription elongation factor GreA (158 aa).

The protein belongs to the GreA/GreB family.

Functionally, necessary for efficient RNA polymerase transcription elongation past template-encoded arresting sites. The arresting sites in DNA have the property of trapping a certain fraction of elongating RNA polymerases that pass through, resulting in locked ternary complexes. Cleavage of the nascent transcript by cleavage factors such as GreA or GreB allows the resumption of elongation from the new 3'terminus. GreA releases sequences of 2 to 3 nucleotides. The chain is Transcription elongation factor GreA from Agrobacterium fabrum (strain C58 / ATCC 33970) (Agrobacterium tumefaciens (strain C58)).